A 130-amino-acid polypeptide reads, in one-letter code: RutC family protein in leuC 5'region (130 aa).

This sequence belongs to the RutC family.

The polypeptide is RutC family protein in leuC 5'region (Leuconostoc mesenteroides subsp. cremoris).